Reading from the N-terminus, the 363-residue chain is Ribosomal RNA large subunit methyltransferase M (363 aa).

S-adenosyl-L-methionine is bound by residues serine 187, 220-223 (CPGG), aspartate 239, aspartate 259, and aspartate 276. The Proton acceptor role is filled by lysine 305.

This sequence belongs to the class I-like SAM-binding methyltransferase superfamily. RNA methyltransferase RlmE family. RlmM subfamily. Monomer.

It localises to the cytoplasm. The catalysed reaction is cytidine(2498) in 23S rRNA + S-adenosyl-L-methionine = 2'-O-methylcytidine(2498) in 23S rRNA + S-adenosyl-L-homocysteine + H(+). Functionally, catalyzes the 2'-O-methylation at nucleotide C2498 in 23S rRNA. The protein is Ribosomal RNA large subunit methyltransferase M of Shewanella loihica (strain ATCC BAA-1088 / PV-4).